A 670-amino-acid chain; its full sequence is Beta-fructofuranosidase 1 (670 aa).

A disordered region spans residues 1–40; sequence MIPAVADPTTLDGGGARRPLLPETDPRGRAAAGAEQKRPP. Over 1-44 the chain is Cytoplasmic; that stretch reads MIPAVADPTTLDGGGARRPLLPETDPRGRAAAGAEQKRPPATPT. A propeptide spans 1 to 112 (removed in mature form); that stretch reads MIPAVADPTT…APLLGSGALQ (112 aa). The helical; Signal-anchor for type II membrane protein transmembrane segment at 45–65 threads the bilayer; sequence VLTAVVSAVLLLVLVAVTVLA. Topologically, residues 66 to 670 are lumenal; the sequence is SQHVDGQAGG…RPYPATTTSL (605 aa). Substrate is bound by residues 136–139, Gln-155, and Trp-163; that span reads WMND. Residue Asp-139 is part of the active site. N-linked (GlcNAc...) asparagine glycosylation is present at Asn-165. Residues 198 to 199 and 263 to 264 each bind substrate; these read WS and RD. N-linked (GlcNAc...) asparagine glycosylation is present at Asn-275. Substrate contacts are provided by Glu-322 and Asp-362. Asn-518 is a glycosylation site (N-linked (GlcNAc...) asparagine). Cys-519 and Cys-567 form a disulfide bridge. 2 N-linked (GlcNAc...) asparagine glycosylation sites follow: Asn-595 and Asn-639.

Belongs to the glycosyl hydrolase 32 family. In terms of assembly, may be present in two forms, a 70 kDa monomer and a heterodimer of the 30 kDa and 38 kDa subunits. The ratio of the levels of the two forms within cells appears to be regulated developmentally.

It is found in the membrane. It localises to the vacuole lumen. It catalyses the reaction Hydrolysis of terminal non-reducing beta-D-fructofuranoside residues in beta-D-fructofuranosides.. The protein operates within glycan biosynthesis; sucrose metabolism. This chain is Beta-fructofuranosidase 1 (IVR1), found in Zea mays (Maize).